Reading from the N-terminus, the 59-residue chain is Temperature acclimation protein A (59 aa).

A CSD domain is found at 1–55; that stretch reads FNDEKGFGFITPESGPDLFVHFRAIQGNGFKSLKEGQKVTFIAVQGQKGMQADKV.

The protein resides in the cytoplasm. Functionally, affects cell viability at low temperatures. The polypeptide is Temperature acclimation protein A (tapA) (Pseudomonas fragi).